Here is a 512-residue protein sequence, read N- to C-terminus: Catalase (512 aa).

Active-site residues include His60 and Asn133. Residue Tyr344 participates in heme binding. Phosphoserine is present on Ser363. A compositionally biased stretch (basic and acidic residues) spans Glu488–Pro505. Residues Glu488 to Ser512 are disordered.

This sequence belongs to the catalase family. Heme serves as cofactor.

The protein resides in the peroxisome matrix. The catalysed reaction is 2 H2O2 = O2 + 2 H2O. Its function is as follows. Catalyzes the degradation of hydrogen peroxide (H(2)O(2)) generated by peroxisomal oxidases to water and oxygen, thereby protecting cells from the toxic effects of hydrogen peroxide. The sequence is that of Catalase (cta1) from Schizosaccharomyces pombe (strain 972 / ATCC 24843) (Fission yeast).